Here is a 392-residue protein sequence, read N- to C-terminus: Zinc transporter zipt-7.1 (392 aa).

N-linked (GlcNAc...) asparagine glycosylation is present at Asn-63. A run of 2 helical transmembrane segments spans residues 82–102 (VFSL…LFFI) and 114–134 (ILLA…IIPH). Residues 139 to 162 (HSHGAHDHDHAHSHDHAHNDHSHD) are disordered. A compositionally biased stretch (basic and acidic residues) spans 142-162 (GAHDHDHAHSHDHAHNDHSHD). The helical transmembrane segment at 170–190 (GIYVIAGILVFMMVEQLVRII) threads the bilayer. Asn-248 carries an N-linked (GlcNAc...) asparagine glycan. The next 3 helical transmembrane spans lie at 255-275 (IGAS…TVLL), 304-324 (VTAL…NPVL), and 331-351 (GAIM…SVIP). N-linked (GlcNAc...) asparagine glycosylation occurs at Asn-361. The helical transmembrane segment at 371–391 (SLVHLIAICMGVGMMYIVSLV) threads the bilayer.

It belongs to the ZIP transporter (TC 2.A.5) family. KE4/Catsup subfamily.

It is found in the membrane. Functionally, zinc transporter which regulates intracellular zinc levels. Required for spermatogenesis in both hermaphrodites and males where it resides in an inactive form in immature sperm, spermatids, but is likely activated in response to reduced spe-4 and spe-6 function. Upon activation, mediates the release of zinc from internal stores in spermatids into the cytoplasm. The resulting increase in cytoplasmic zinc levels promotes spermatid activation and subsequent differentiation into mature motile sperm that are capable of fertilization. The chain is Zinc transporter zipt-7.1 from Caenorhabditis briggsae.